Here is a 263-residue protein sequence, read N- to C-terminus: tRNA (guanine-N(1)-)-methyltransferase (263 aa).

S-adenosyl-L-methionine-binding positions include Gly113 and 137 to 142 (LGDYVL).

This sequence belongs to the RNA methyltransferase TrmD family. As to quaternary structure, homodimer.

Its subcellular location is the cytoplasm. It catalyses the reaction guanosine(37) in tRNA + S-adenosyl-L-methionine = N(1)-methylguanosine(37) in tRNA + S-adenosyl-L-homocysteine + H(+). In terms of biological role, specifically methylates guanosine-37 in various tRNAs. This chain is tRNA (guanine-N(1)-)-methyltransferase, found in Renibacterium salmoninarum (strain ATCC 33209 / DSM 20767 / JCM 11484 / NBRC 15589 / NCIMB 2235).